The chain runs to 521 residues: ATP synthase subunit beta (521 aa).

2 stretches are compositionally biased toward low complexity: residues 1–21 (MAKA…AAKA) and 28–42 (PKTT…TKSG). A disordered region spans residues 1 to 42 (MAKAATPKTTAAAEAKPAAKAPAKKAAPKTTAAAKPAATKSG). Residue 199–206 (GGAGVGKT) participates in ATP binding.

This sequence belongs to the ATPase alpha/beta chains family. In terms of assembly, F-type ATPases have 2 components, CF(1) - the catalytic core - and CF(0) - the membrane proton channel. CF(1) has five subunits: alpha(3), beta(3), gamma(1), delta(1), epsilon(1). CF(0) has three main subunits: a(1), b(2) and c(9-12). The alpha and beta chains form an alternating ring which encloses part of the gamma chain. CF(1) is attached to CF(0) by a central stalk formed by the gamma and epsilon chains, while a peripheral stalk is formed by the delta and b chains.

It is found in the cell inner membrane. It carries out the reaction ATP + H2O + 4 H(+)(in) = ADP + phosphate + 5 H(+)(out). Produces ATP from ADP in the presence of a proton gradient across the membrane. The catalytic sites are hosted primarily by the beta subunits. The chain is ATP synthase subunit beta from Brucella abortus (strain 2308).